Reading from the N-terminus, the 126-residue chain is UPF0538 protein C2orf76 (126 aa).

It belongs to the UPF0538 family.

In Homo sapiens (Human), this protein is UPF0538 protein C2orf76 (C2orf76).